The primary structure comprises 742 residues: 5-methyltetrahydropteroyltriglutamate--homocysteine methyltransferase (742 aa).

Residues Arg18–Lys21 and Lys112 each bind 5-methyltetrahydropteroyltri-L-glutamate. L-homocysteine-binding positions include Ile420–Ser422 and Glu473. L-methionine is bound by residues Ile420 to Ser422 and Glu473. Position 550 (Trp550) interacts with 5-methyltetrahydropteroyltri-L-glutamate. Position 588 (Asp588) interacts with L-homocysteine. Asp588 provides a ligand contact to L-methionine. Glu594 provides a ligand contact to 5-methyltetrahydropteroyltri-L-glutamate. Zn(2+)-binding residues include His630, Cys632, and Glu654. His683 functions as the Proton donor in the catalytic mechanism. Cys715 contacts Zn(2+).

Belongs to the vitamin-B12 independent methionine synthase family. Requires Zn(2+) as cofactor.

The catalysed reaction is 5-methyltetrahydropteroyltri-L-glutamate + L-homocysteine = tetrahydropteroyltri-L-glutamate + L-methionine. It functions in the pathway amino-acid biosynthesis; L-methionine biosynthesis via de novo pathway; L-methionine from L-homocysteine (MetE route): step 1/1. Catalyzes the transfer of a methyl group from 5-methyltetrahydrofolate to homocysteine resulting in methionine formation. The protein is 5-methyltetrahydropteroyltriglutamate--homocysteine methyltransferase of Staphylococcus aureus (strain Mu3 / ATCC 700698).